The following is a 406-amino-acid chain: Tryptophan synthase beta chain (406 aa).

Lys-99 is modified (N6-(pyridoxal phosphate)lysine).

This sequence belongs to the TrpB family. In terms of assembly, tetramer of two alpha and two beta chains. Requires pyridoxal 5'-phosphate as cofactor.

It carries out the reaction (1S,2R)-1-C-(indol-3-yl)glycerol 3-phosphate + L-serine = D-glyceraldehyde 3-phosphate + L-tryptophan + H2O. It participates in amino-acid biosynthesis; L-tryptophan biosynthesis; L-tryptophan from chorismate: step 5/5. Its function is as follows. The beta subunit is responsible for the synthesis of L-tryptophan from indole and L-serine. The polypeptide is Tryptophan synthase beta chain (Brucella canis (strain ATCC 23365 / NCTC 10854 / RM-666)).